Consider the following 554-residue polypeptide: CTP synthase (554 aa).

The amidoligase domain stretch occupies residues 1-265 (MTPLIFVTGG…DELVIDQFKL (265 aa)). Residue Ser-13 coordinates CTP. Ser-13 contacts UTP. ATP contacts are provided by residues 14–19 (SLGKGI) and Asp-71. 2 residues coordinate Mg(2+): Asp-71 and Glu-139. CTP-binding positions include 146–148 (DIE), 186–191 (KTKPTQ), and Lys-222. Residues 186–191 (KTKPTQ) and Lys-222 contribute to the UTP site. The 254-residue stretch at 292–545 (TIAVVGKYVD…VRAAREKKAG (254 aa)) folds into the Glutamine amidotransferase type-1 domain. An L-glutamine-binding site is contributed by Gly-353. The active-site Nucleophile; for glutamine hydrolysis is the Cys-380. L-glutamine-binding positions include 381–384 (YGMQ), Glu-404, and Arg-471. Active-site residues include His-518 and Glu-520.

Belongs to the CTP synthase family. In terms of assembly, homotetramer.

The enzyme catalyses UTP + L-glutamine + ATP + H2O = CTP + L-glutamate + ADP + phosphate + 2 H(+). The catalysed reaction is L-glutamine + H2O = L-glutamate + NH4(+). It carries out the reaction UTP + NH4(+) + ATP = CTP + ADP + phosphate + 2 H(+). It functions in the pathway pyrimidine metabolism; CTP biosynthesis via de novo pathway; CTP from UDP: step 2/2. With respect to regulation, allosterically activated by GTP, when glutamine is the substrate; GTP has no effect on the reaction when ammonia is the substrate. The allosteric effector GTP functions by stabilizing the protein conformation that binds the tetrahedral intermediate(s) formed during glutamine hydrolysis. Inhibited by the product CTP, via allosteric rather than competitive inhibition. Functionally, catalyzes the ATP-dependent amination of UTP to CTP with either L-glutamine or ammonia as the source of nitrogen. Regulates intracellular CTP levels through interactions with the four ribonucleotide triphosphates. The protein is CTP synthase of Xanthomonas campestris pv. campestris (strain B100).